An 806-amino-acid polypeptide reads, in one-letter code: N-terminal kinase-like protein (806 aa).

Residues 14 to 314 (FELSPEPPEG…PEDFCRHKVL (301 aa)) form the Protein kinase domain. HEAT repeat units follow at residues 350 to 388 (IIPV…VNTQ), 389 to 427 (IFPH…LNVE), and 507 to 545 (ILPV…EDPT). Disordered regions lie at residues 586 to 642 (RAHP…TADR) and 663 to 806 (DDWS…RKLD). The segment covering 601–611 (RPVPEGNPAPA) has biased composition (pro residues). Ser-752 is subject to Phosphoserine. A compositionally biased stretch (acidic residues) spans 752 to 762 (SWGEDNWEGLE). A coiled-coil region spans residues 755 to 795 (EDNWEGLEAESRQVKAELARKKREERRREMEAKRAEKKTTK). Basic and acidic residues-rich tracts occupy residues 763–773 (AESRQVKAELA) and 780–793 (RRRE…EKKT). The tract at residues 791-806 (KKTTKGPMKLGARKLD) is interaction with COPB1.

It belongs to the protein kinase superfamily. Homooligomer. Interacts with GORAB. Interacts with COPA, COPB1 and COPB2. Interacts with AP2B1. Expressed in diaphragm, quadriceps, thymus, liver, lung, spleen, kidney, heart and brain. Prominently expressed in neurons, and enriched at central nervous system synapses and neuromuscular junctions.

It localises to the cytoplasm. Its subcellular location is the cytoskeleton. It is found in the microtubule organizing center. The protein localises to the centrosome. The protein resides in the endoplasmic reticulum-Golgi intermediate compartment. It localises to the golgi apparatus. Its subcellular location is the cis-Golgi network. Functionally, regulates COPI-mediated retrograde protein traffic at the interface between the Golgi apparatus and the endoplasmic reticulum. Involved in the maintenance of the Golgi apparatus morphology. In Mus musculus (Mouse), this protein is N-terminal kinase-like protein (Scyl1).